The sequence spans 145 residues: Large ribosomal subunit protein eL32 (145 aa).

Belongs to the eukaryotic ribosomal protein eL32 family.

In Aeropyrum pernix (strain ATCC 700893 / DSM 11879 / JCM 9820 / NBRC 100138 / K1), this protein is Large ribosomal subunit protein eL32 (rpl32e).